A 100-amino-acid chain; its full sequence is Urease subunit gamma (100 aa).

It belongs to the urease gamma subunit family. As to quaternary structure, heterotrimer of UreA (gamma), UreB (beta) and UreC (alpha) subunits. Three heterotrimers associate to form the active enzyme.

The protein resides in the cytoplasm. The enzyme catalyses urea + 2 H2O + H(+) = hydrogencarbonate + 2 NH4(+). The protein operates within nitrogen metabolism; urea degradation; CO(2) and NH(3) from urea (urease route): step 1/1. This is Urease subunit gamma from Nostoc punctiforme (strain ATCC 29133 / PCC 73102).